A 447-amino-acid chain; its full sequence is MREIIHVSAGQCGNQIGAAFWETISGEHGINPSAIYEGTDPLQLERLSVYYNEAGNGKYVPRAVLVDLEPGVMDAVRSGTYGNLFRPDNFIFGQSGAGNNWAKGHYTEGAELVDSVLDIVRREAENSDSLQGFQISHSLGGGTGSGMGTLLISKIREEYPDRMMATFSVVPSPKVSDTIVEPYNATLSVHQLIENADETFCIDNEALYDICQHTLKLKQPTHADLNQLVSGVMSGITTCLRFPGQLNSDLRKLAVNLVPFPRLHFFMVGYAPLSAPGQQSFRSLTVPELTQQLFDSKNMMAASDPKRGRYLTVAAFFRGKVSIKEVEDQMRSVQERNSAYFVEWIPNNVQTAICSVPPKDVKMSATFIANSTSIQELFKRVGDQFSAMFRRKAFLHWYTNEGMDITEFAEAESNMNDLVSEYQQYQNATVDDEDMEYEDELPLEDEM.

Glutamine 11, glutamate 69, serine 138, glycine 142, threonine 143, glycine 144, asparagine 204, and asparagine 226 together coordinate GTP. Glutamate 69 contributes to the Mg(2+) binding site.

It belongs to the tubulin family. Dimer of alpha and beta chains. A typical microtubule is a hollow water-filled tube with an outer diameter of 25 nm and an inner diameter of 15 nM. Alpha-beta heterodimers associate head-to-tail to form protofilaments running lengthwise along the microtubule wall with the beta-tubulin subunit facing the microtubule plus end conferring a structural polarity. Microtubules usually have 13 protofilaments but different protofilament numbers can be found in some organisms and specialized cells. Mg(2+) is required as a cofactor.

Its subcellular location is the cytoplasm. The protein resides in the cytoskeleton. In terms of biological role, tubulin is the major constituent of microtubules, a cylinder consisting of laterally associated linear protofilaments composed of alpha- and beta-tubulin heterodimers. Microtubules grow by the addition of GTP-tubulin dimers to the microtubule end, where a stabilizing cap forms. Below the cap, tubulin dimers are in GDP-bound state, owing to GTPase activity of alpha-tubulin. The protein is Tubulin beta-1 chain of Geotrichum candidum (Oospora lactis).